Here is a 267-residue protein sequence, read N- to C-terminus: Hydroxyethylthiazole kinase (267 aa).

Met46 lines the substrate pocket. Arg122 and Ser168 together coordinate ATP. Gly195 lines the substrate pocket.

Belongs to the Thz kinase family. The cofactor is Mg(2+).

The catalysed reaction is 5-(2-hydroxyethyl)-4-methylthiazole + ATP = 4-methyl-5-(2-phosphooxyethyl)-thiazole + ADP + H(+). It functions in the pathway cofactor biosynthesis; thiamine diphosphate biosynthesis; 4-methyl-5-(2-phosphoethyl)-thiazole from 5-(2-hydroxyethyl)-4-methylthiazole: step 1/1. Functionally, catalyzes the phosphorylation of the hydroxyl group of 4-methyl-5-beta-hydroxyethylthiazole (THZ). The sequence is that of Hydroxyethylthiazole kinase from Nitratidesulfovibrio vulgaris (strain ATCC 29579 / DSM 644 / CCUG 34227 / NCIMB 8303 / VKM B-1760 / Hildenborough) (Desulfovibrio vulgaris).